A 152-amino-acid polypeptide reads, in one-letter code: Transcriptional regulator MraZ (152 aa).

SpoVT-AbrB domains follow at residues alanine 5 to glutamate 52 and alanine 81 to alanine 124.

It belongs to the MraZ family. In terms of assembly, forms oligomers.

The protein resides in the cytoplasm. It is found in the nucleoid. The chain is Transcriptional regulator MraZ from Shewanella violacea (strain JCM 10179 / CIP 106290 / LMG 19151 / DSS12).